A 286-amino-acid polypeptide reads, in one-letter code: Polyamine aminopropyltransferase (286 aa).

The 234-residue stretch at T5 to D238 folds into the PABS domain. S-methyl-5'-thioadenosine is bound at residue Q33. 2 residues coordinate spermidine: H64 and D88. S-methyl-5'-thioadenosine is bound by residues E108 and D140–G141. D158 functions as the Proton acceptor in the catalytic mechanism. Position 158–161 (D158–D161) interacts with spermidine. An S-methyl-5'-thioadenosine-binding site is contributed by P165.

Belongs to the spermidine/spermine synthase family. As to quaternary structure, homodimer or homotetramer.

It is found in the cytoplasm. It carries out the reaction S-adenosyl 3-(methylsulfanyl)propylamine + putrescine = S-methyl-5'-thioadenosine + spermidine + H(+). Its pathway is amine and polyamine biosynthesis; spermidine biosynthesis; spermidine from putrescine: step 1/1. Its function is as follows. Catalyzes the irreversible transfer of a propylamine group from the amino donor S-adenosylmethioninamine (decarboxy-AdoMet) to putrescine (1,4-diaminobutane) to yield spermidine. In Salmonella typhi, this protein is Polyamine aminopropyltransferase.